The chain runs to 366 residues: Histidinol-phosphate aminotransferase (366 aa).

Lysine 231 is modified (N6-(pyridoxal phosphate)lysine).

This sequence belongs to the class-II pyridoxal-phosphate-dependent aminotransferase family. Histidinol-phosphate aminotransferase subfamily. Pyridoxal 5'-phosphate is required as a cofactor.

The catalysed reaction is L-histidinol phosphate + 2-oxoglutarate = 3-(imidazol-4-yl)-2-oxopropyl phosphate + L-glutamate. Its pathway is amino-acid biosynthesis; L-histidine biosynthesis; L-histidine from 5-phospho-alpha-D-ribose 1-diphosphate: step 7/9. This is Histidinol-phosphate aminotransferase from Halobacterium salinarum (strain ATCC 29341 / DSM 671 / R1).